The primary structure comprises 737 residues: Autolysin (737 aa).

Over residues 1-13 (MKKESMSRIERRK) the composition is skewed to basic and acidic residues. Disordered regions lie at residues 1-28 (MKKESMSRIERRKAQQRKKTPVQWKKST), 51-132 (AEAT…TDSS), and 335-360 (PSSGGNTGGGTVNPGTGGSNNQSGTN). Residues 1–53 (MKKESMSRIERRKAQQRKKTPVQWKKSTTLFSSALIVSSVGTPVALLPVTAEA) form the signal peptide. The segment covering 67–117 (PTTETGLVETPTTETTPGTTEQPTTDSSTTTESTTESSKETPTTPSTEQPT) has biased composition (low complexity). Residues 118–132 (ADSTTPVESGTTDSS) are compositionally biased toward polar residues. A compositionally biased stretch (gly residues) spans 339-352 (GNTGGGTVNPGTGG). The region spanning 361–404 (TYYTVKSGDTLNKIAAQYGVSVANLRSWNGISGDLIFVGQKLIV) is the LysM 1 domain. Positions 409–429 (SGNTGGSGSGGSNNNQSGTNT) are disordered. Over residues 410-419 (GNTGGSGSGG) the composition is skewed to gly residues. Low complexity predominate over residues 420 to 429 (SNNNQSGTNT). 5 consecutive LysM domains span residues 429 to 472 (TYYT…KLIV), 497 to 540 (TYYT…KIIV), 565 to 608 (TYYT…KIIV), 631 to 674 (TSYT…TIIV), and 693 to 736 (KRHT…TLKV).

The protein belongs to the glycosyl hydrolase 73 family.

The protein localises to the secreted. In terms of biological role, hydrolyzes the cell wall of E.faecalis and M.lysodeikticus. May play an important role in cell wall growth and cell separation. In Enterococcus faecalis (strain ATCC 700802 / V583), this protein is Autolysin.